The chain runs to 245 residues: Terpene cyclase ausL (245 aa).

7 helical membrane-spanning segments follow: residues 17–37 (ILAI…VNYI), 51–71 (IGIL…WMFP), 76–96 (HWQG…LVTL), 113–133 (IVFI…ALAA), 138–158 (ALGF…GGIA), 170–190 (SYLI…KLCI), and 206–226 (MCWF…FLYF).

Belongs to the paxB family.

The protein resides in the membrane. It functions in the pathway secondary metabolite biosynthesis; terpenoid biosynthesis. Its function is as follows. Terpene cyclase; part of the gene cluster A that mediates the biosynthesis of the fungal meroterpenoid acetoxydehydroaustin. The first step of the pathway is the synthesis of 3,5-dimethylorsellinic acid by the polyketide synthase ausA. 3,5-dimethylorsellinic acid is then prenylated by the polyprenyl transferase ausN. Further epoxidation by the FAD-dependent monooxygenase ausM and cyclization by the probable terpene cyclase ausL lead to the formation of protoaustinoid A. Protoaustinoid A is then oxidized to spiro-lactone preaustinoid A3 by the combined action of the FAD-binding monooxygenases ausB and ausC, and the dioxygenase ausE. Acid-catalyzed keto-rearrangement and ring contraction of the tetraketide portion of preaustinoid A3 by ausJ lead to the formation of preaustinoid A4. The aldo-keto reductase ausK, with the help of ausH, is involved in the next step by transforming preaustinoid A4 into isoaustinone which is in turn hydroxylated by the P450 monooxygenase ausI to form austinolide. The cytochrome P450 monooxygenase ausG then modifies austinolide to austinol. Austinol is further acetylated to austin by the O-acetyltransferase ausP, which spontaneously changes to dehydroaustin. The cytochrome P450 monooxygenase then converts dehydroaustin is into 7-dehydrodehydroaustin. The hydroxylation catalyzed by ausR permits the second O-acetyltransferase ausQ to add an additional acetyl group to the molecule, leading to the formation of acetoxydehydroaustin. Due to genetic rearrangements of the clusters and the subsequent loss of some enzymes, the end product of the Penicillium brasilianum austinoid biosynthesis clusters is acetoxydehydroaustin. This chain is Terpene cyclase ausL, found in Penicillium brasilianum.